Consider the following 394-residue polypeptide: NAD(P)H-quinone oxidoreductase subunit H (394 aa).

This sequence belongs to the complex I 49 kDa subunit family. In terms of assembly, NDH-1 can be composed of about 15 different subunits; different subcomplexes with different compositions have been identified which probably have different functions.

The protein resides in the cellular thylakoid membrane. The catalysed reaction is a plastoquinone + NADH + (n+1) H(+)(in) = a plastoquinol + NAD(+) + n H(+)(out). It catalyses the reaction a plastoquinone + NADPH + (n+1) H(+)(in) = a plastoquinol + NADP(+) + n H(+)(out). Its function is as follows. NDH-1 shuttles electrons from an unknown electron donor, via FMN and iron-sulfur (Fe-S) centers, to quinones in the respiratory and/or the photosynthetic chain. The immediate electron acceptor for the enzyme in this species is believed to be plastoquinone. Couples the redox reaction to proton translocation, and thus conserves the redox energy in a proton gradient. Cyanobacterial NDH-1 also plays a role in inorganic carbon-concentration. In Microcystis aeruginosa (strain NIES-843 / IAM M-2473), this protein is NAD(P)H-quinone oxidoreductase subunit H.